A 100-amino-acid chain; its full sequence is Urease subunit gamma (100 aa).

Belongs to the urease gamma subunit family. As to quaternary structure, heterotrimer of UreA (gamma), UreB (beta) and UreC (alpha) subunits. Three heterotrimers associate to form the active enzyme.

It localises to the cytoplasm. The catalysed reaction is urea + 2 H2O + H(+) = hydrogencarbonate + 2 NH4(+). It functions in the pathway nitrogen metabolism; urea degradation; CO(2) and NH(3) from urea (urease route): step 1/1. The protein is Urease subunit gamma of Cupriavidus pinatubonensis (strain JMP 134 / LMG 1197) (Cupriavidus necator (strain JMP 134)).